A 452-amino-acid chain; its full sequence is Translation initiation factor eIF2B subunit gamma (452 aa).

Met-1 is modified (N-acetylmethionine). Residue Ser-260 is modified to Phosphoserine.

Belongs to the eIF-2B gamma/epsilon subunits family. Component of the translation initiation factor 2B (eIF2B) complex which is a heterodecamer of two sets of five different subunits: alpha, beta, gamma, delta and epsilon. Subunits alpha, beta and delta comprise a regulatory subcomplex and subunits epsilon and gamma comprise a catalytic subcomplex. Within the complex, the hexameric regulatory complex resides at the center, with the two heterodimeric catalytic subcomplexes bound on opposite sides.

The protein resides in the cytoplasm. It is found in the cytosol. Activated by the chemical integrated stress response (ISR) inhibitor ISRIB which stimulates guanine nucleotide exchange factor activity for both phosphorylated and unphosphorylated eIF2. Functionally, acts as a component of the translation initiation factor 2B (eIF2B) complex, which catalyzes the exchange of GDP for GTP on the eukaryotic initiation factor 2 (eIF2) complex gamma subunit. Its guanine nucleotide exchange factor activity is repressed when bound to eIF2 complex phosphorylated on the alpha subunit, thereby limiting the amount of methionyl-initiator methionine tRNA available to the ribosome and consequently global translation is repressed. The sequence is that of Translation initiation factor eIF2B subunit gamma (EIF2B3) from Macaca fascicularis (Crab-eating macaque).